Reading from the N-terminus, the 202-residue chain is Recoverin (202 aa).

The N-myristoyl glycine moiety is linked to residue G2. EF-hand domains lie at 24–59, 61–96, 97–132, and 147–182; these read TEEE…FFPE, DPKA…TSAG, KTNQ…IFKM, and TPEK…NKEI. Residue C39 is modified to Cysteine sulfenic acid (-SOH). Residues D74, N76, D78, T80, E85, D110, D112, N114, T116, and E121 each coordinate Ca(2+). The tract at residues 189–192 is interaction with GRK1; sequence EPQK. Residues 191 to 202 form a modulates EF-hand 3 domain calcium binding affinity region; sequence QKVKEKLKEKKL.

This sequence belongs to the recoverin family. In terms of assembly, homodimer; disulfide-linked. Homodimerization is caused by prolonged intense illumination. May form a complex composed of RHO, GRK1 and RCVRN in a Ca(2+)-dependent manner; RCVRN prevents the interaction between GRK1 and RHO. Interacts (via C-terminus) with GRK1 (via N-terminus); the interaction is Ca(2+)-dependent. The N-terminal glycine is linked to one of four different types of acyl groups. The most abundant is myristoleate (14:1), but 14:0, 14:2, and 12:0 acyl residues are also present. The Ca(2+) induced exposure of the myristoyl group, known as the calcium-myristoyl switch, promotes RCVRN binding to the photoreceptor cell membranes only when intracellular Ca(2+) concentration is high. Post-translationally, oxidation on Cys-39 occurs in response to prolonged intense illumination and results in the formation of disulfide homodimers, and to a lesser extent disulfide-linked heterodimers. Expressed in the retina (at protein level). Expressed in the pineal gland (at protein level).

It localises to the photoreceptor inner segment. It is found in the cell projection. The protein localises to the cilium. The protein resides in the photoreceptor outer segment. Its subcellular location is the photoreceptor outer segment membrane. It localises to the perikaryon. Functionally, acts as a calcium sensor and regulates phototransduction of cone and rod photoreceptor cells. Modulates light sensitivity of cone photoreceptor in dark and dim conditions. In response to high Ca(2+) levels induced by low light levels, prolongs RHO/rhodopsin activation in rod photoreceptor cells by binding to and inhibiting GRK1-mediated phosphorylation of RHO/rhodopsin. Plays a role in scotopic vision/enhances vision in dim light by enhancing signal transfer between rod photoreceptors and rod bipolar cells. Improves rod photoreceptor sensitivity in dim light and mediates response of rod photoreceptors to facilitate detection of change and motion in bright light. This chain is Recoverin (RCVRN), found in Bos taurus (Bovine).